A 420-amino-acid chain; its full sequence is Serine--tRNA ligase (420 aa).

Residue 228-230 (TAE) coordinates L-serine. 259-261 (RSE) contacts ATP. Glu-282 is a binding site for L-serine. Position 346 to 349 (346 to 349 (EISS)) interacts with ATP. Ser-382 is a binding site for L-serine.

This sequence belongs to the class-II aminoacyl-tRNA synthetase family. Type-1 seryl-tRNA synthetase subfamily. Homodimer. The tRNA molecule binds across the dimer.

It localises to the cytoplasm. It catalyses the reaction tRNA(Ser) + L-serine + ATP = L-seryl-tRNA(Ser) + AMP + diphosphate + H(+). The catalysed reaction is tRNA(Sec) + L-serine + ATP = L-seryl-tRNA(Sec) + AMP + diphosphate + H(+). It participates in aminoacyl-tRNA biosynthesis; selenocysteinyl-tRNA(Sec) biosynthesis; L-seryl-tRNA(Sec) from L-serine and tRNA(Sec): step 1/1. Functionally, catalyzes the attachment of serine to tRNA(Ser). Is also able to aminoacylate tRNA(Sec) with serine, to form the misacylated tRNA L-seryl-tRNA(Sec), which will be further converted into selenocysteinyl-tRNA(Sec). This Mycoplasmoides gallisepticum (strain R(low / passage 15 / clone 2)) (Mycoplasma gallisepticum) protein is Serine--tRNA ligase.